Consider the following 792-residue polypeptide: Genome polyprotein (792 aa).

Residues Met-1 to Met-15 form an interaction with host EXOC1 region. Topologically, residues Met-1–Ser-101 are cytoplasmic. Residues Leu-37–Phe-72 form a hydrophobic; homodimerization of capsid protein C region. The propeptide at Ser-101–Ala-114 is ER anchor for the capsid protein C, removed in mature form by serine protease NS3. Residues Val-102–Thr-119 traverse the membrane as a helical segment. The Extracellular segment spans residues Arg-120–Leu-242. Residue Asn-183 is glycosylated (N-linked (GlcNAc...) asparagine; by host). Residues Arg-243 to Thr-260 form a helical membrane-spanning segment. Residue Ser-261 is a topological domain, cytoplasmic. A helical transmembrane segment spans residues Ile-262–Ala-280. Residues Met-281–Gly-725 lie on the Extracellular side of the membrane. 4 disulfides stabilise this stretch: Cys-283/Cys-310, Cys-340/Cys-401, Cys-354/Cys-385, and Cys-372/Cys-396. Residue Asn-347 is glycosylated (N-linked (GlcNAc...) asparagine; by host). Residues Asp-378 to Gly-391 are fusion peptide. Asn-433 carries an N-linked (GlcNAc...) asparagine; by host glycan. Cystine bridges form between Cys-465–Cys-565 and Cys-582–Cys-613. A helical membrane pass occupies residues Val-726–Leu-746. Residues Gly-747–Ser-752 are Cytoplasmic-facing. Residues Thr-753–Ala-775 form a helical membrane-spanning segment. The Extracellular portion of the chain corresponds to Asp-776–Ser-792. Cys-779 and Cys-790 are disulfide-bonded.

Homodimer. Interacts (via N-terminus) with host EXOC1 (via C-terminus); this interaction results in EXOC1 degradation through the proteasome degradation pathway. As to quaternary structure, forms heterodimers with envelope protein E in the endoplasmic reticulum and Golgi. In terms of assembly, homodimer; in the endoplasmic reticulum and Golgi. Interacts with protein prM. Interacts with non-structural protein 1. Homodimer; Homohexamer when secreted. Interacts with envelope protein E. In terms of processing, specific enzymatic cleavages in vivo yield mature proteins. Cleavages in the lumen of endoplasmic reticulum are performed by host signal peptidase, wereas cleavages in the cytoplasmic side are performed by serine protease NS3. Signal cleavage at the 2K-4B site requires a prior NS3 protease-mediated cleavage at the 4A-2K site. N-glycosylated. Post-translationally, N-glycosylated. The excreted form is glycosylated and this is required for efficient secretion of the protein from infected cells.

Its subcellular location is the virion. It is found in the host nucleus. The protein resides in the host cytoplasm. The protein localises to the host perinuclear region. It localises to the secreted. Its subcellular location is the virion membrane. It is found in the host endoplasmic reticulum membrane. Functionally, plays a role in virus budding by binding to the cell membrane and gathering the viral RNA into a nucleocapsid that forms the core of a mature virus particle. During virus entry, may induce genome penetration into the host cytoplasm after hemifusion induced by the surface proteins. Can migrate to the cell nucleus where it modulates host functions. Overcomes the anti-viral effects of host EXOC1 by sequestering and degrading the latter through the proteasome degradation pathway. Its function is as follows. Inhibits RNA silencing by interfering with host Dicer. In terms of biological role, prevents premature fusion activity of envelope proteins in trans-Golgi by binding to envelope protein E at pH6.0. After virion release in extracellular space, gets dissociated from E dimers. Acts as a chaperone for envelope protein E during intracellular virion assembly by masking and inactivating envelope protein E fusion peptide. prM is the only viral peptide matured by host furin in the trans-Golgi network probably to avoid catastrophic activation of the viral fusion activity in acidic Golgi compartment prior to virion release. prM-E cleavage is inefficient, and many virions are only partially matured. These uncleaved prM would play a role in immune evasion. Functionally, may play a role in virus budding. Exerts cytotoxic effects by activating a mitochondrial apoptotic pathway through M ectodomain. May display a viroporin activity. Its function is as follows. Binds to host cell surface receptor and mediates fusion between viral and cellular membranes. Envelope protein is synthesized in the endoplasmic reticulum in the form of heterodimer with protein prM. They play a role in virion budding in the ER, and the newly formed immature particle is covered with 60 spikes composed of heterodimer between precursor prM and envelope protein E. The virion is transported to the Golgi apparatus where the low pH causes dissociation of PrM-E heterodimers and formation of E homodimers. prM-E cleavage is inefficient, and many virions are only partially matured. These uncleaved prM would play a role in immune evasion. In terms of biological role, involved in immune evasion, pathogenesis and viral replication. Once cleaved off the polyprotein, is targeted to three destinations: the viral replication cycle, the plasma membrane and the extracellular compartment. Essential for viral replication. Required for formation of the replication complex and recruitment of other non-structural proteins to the ER-derived membrane structures. Excreted as a hexameric lipoparticle that plays a role against host immune response. Antagonizing the complement function. Binds to the host macrophages and dendritic cells. Inhibits signal transduction originating from Toll-like receptor 3 (TLR3). Disrupts the host endothelial glycocalyx layer of host pulmonary microvascular endothelial cells, inducing degradation of sialic acid and shedding of heparan sulfate proteoglycans. NS1 induces expression of sialidases, heparanase, and activates cathepsin L, which activates heparanase via enzymatic cleavage. These effects are probably linked to the endothelial hyperpermeability observed in severe dengue disease. The protein is Genome polyprotein of Aedes aegypti (Yellowfever mosquito).